A 60-amino-acid chain; its full sequence is Mastoparan-D (60 aa).

The N-terminal stretch at 1-27 is a signal peptide; it reads MKNTILILFTAFIALLGFFGMSAEALA. AXPX repeat units follow at residues 27 to 30, 31 to 34, 35 to 38, and 41 to 44; these read ADPI, ADPV, AGPN, and ADPE. Positions 28–45 are excised as a propeptide; sequence DPIADPVAGPNPEADPEA. At Leu59 the chain carries Leucine amide.

It belongs to the MCD family. Mastoparan subfamily. Expressed by the venom gland.

It is found in the secreted. Its subcellular location is the target cell membrane. In terms of biological role, antimicrobial and mast cell degranulating peptide. Has broad spectrum antibacterial activity against both Gram-positive and Gram-negative bacteria (S.aureus MIC=24-32 ug/ml, S.xylosus MIC=2 ug/ml, S.alactolyticus MIC=16 ug/ml, C.koseri MIC=4 ug/ml, E.coli MIC=8 ug/ml, K.pneumoniae MIC=32 ug/ml, P.aerugiosa MIC=128 ug/ml, S.choleraesuis MIC=16 ug/ml, S.typhimurium MIC=32 ug/ml, V.parahamelytics MIC=32 ug/ml). Affects membrane permeability of E.coli. Shows hemolytic activities on sheep, chicken and human erythrocytes. Its mast cell degranulation activity may be related to the activation of G-protein coupled receptors in mast cells as well as interaction with other proteins located in cell endosomal membranes in the mast cells. The chain is Mastoparan-D from Vespa ducalis (Black-tailed hornet).